We begin with the raw amino-acid sequence, 133 residues long: ATP synthase epsilon chain (133 aa).

Belongs to the ATPase epsilon chain family. F-type ATPases have 2 components, CF(1) - the catalytic core - and CF(0) - the membrane proton channel. CF(1) has five subunits: alpha(3), beta(3), gamma(1), delta(1), epsilon(1). CF(0) has three main subunits: a, b and c.

It localises to the cell membrane. Produces ATP from ADP in the presence of a proton gradient across the membrane. The polypeptide is ATP synthase epsilon chain (atpC) (Alkalihalophilus pseudofirmus (strain ATCC BAA-2126 / JCM 17055 / OF4) (Bacillus pseudofirmus)).